We begin with the raw amino-acid sequence, 550 residues long: Glucose-6-phosphate isomerase (550 aa).

The active-site Proton donor is the E356. Catalysis depends on residues H387 and K515.

Belongs to the GPI family.

It is found in the cytoplasm. The catalysed reaction is alpha-D-glucose 6-phosphate = beta-D-fructose 6-phosphate. Its pathway is carbohydrate biosynthesis; gluconeogenesis. The protein operates within carbohydrate degradation; glycolysis; D-glyceraldehyde 3-phosphate and glycerone phosphate from D-glucose: step 2/4. Functionally, catalyzes the reversible isomerization of glucose-6-phosphate to fructose-6-phosphate. The polypeptide is Glucose-6-phosphate isomerase (Vibrio campbellii (strain ATCC BAA-1116)).